Here is an 89-residue protein sequence, read N- to C-terminus: Small ribosomal subunit protein uS15 (89 aa).

It belongs to the universal ribosomal protein uS15 family. In terms of assembly, part of the 30S ribosomal subunit. Forms a bridge to the 50S subunit in the 70S ribosome, contacting the 23S rRNA.

One of the primary rRNA binding proteins, it binds directly to 16S rRNA where it helps nucleate assembly of the platform of the 30S subunit by binding and bridging several RNA helices of the 16S rRNA. Functionally, forms an intersubunit bridge (bridge B4) with the 23S rRNA of the 50S subunit in the ribosome. This Corynebacterium efficiens (strain DSM 44549 / YS-314 / AJ 12310 / JCM 11189 / NBRC 100395) protein is Small ribosomal subunit protein uS15.